Here is a 372-residue protein sequence, read N- to C-terminus: Aminomethyltransferase (372 aa).

It belongs to the GcvT family. In terms of assembly, the glycine cleavage system is composed of four proteins: P, T, L and H.

It catalyses the reaction N(6)-[(R)-S(8)-aminomethyldihydrolipoyl]-L-lysyl-[protein] + (6S)-5,6,7,8-tetrahydrofolate = N(6)-[(R)-dihydrolipoyl]-L-lysyl-[protein] + (6R)-5,10-methylene-5,6,7,8-tetrahydrofolate + NH4(+). Its function is as follows. The glycine cleavage system catalyzes the degradation of glycine. This is Aminomethyltransferase from Paraburkholderia phymatum (strain DSM 17167 / CIP 108236 / LMG 21445 / STM815) (Burkholderia phymatum).